The primary structure comprises 224 residues: Adenylate kinase (224 aa).

Residue 10-15 (GSGKST) coordinates ATP. An NMP region spans residues 30 to 59 (ASGDIIRAEINKGNALGREMKKYIEKGDLL). Residues serine 31, arginine 36, 57–59 (DLL), 83–86 (GYPR), and glutamine 90 each bind AMP. Residues 124 to 161 (GRRICRQCGAVYHIKYNPSKVPGKCDICGGEVIQREDD) form an LID region. An ATP-binding site is contributed by arginine 125. Zn(2+) contacts are provided by cysteine 128 and cysteine 131. Position 134 to 135 (134 to 135 (VY)) interacts with ATP. Zn(2+) contacts are provided by cysteine 148 and cysteine 151. AMP is bound by residues arginine 158 and arginine 169. Glycine 197 provides a ligand contact to ATP.

It belongs to the adenylate kinase family. In terms of assembly, monomer.

It localises to the cytoplasm. It catalyses the reaction AMP + ATP = 2 ADP. It participates in purine metabolism; AMP biosynthesis via salvage pathway; AMP from ADP: step 1/1. Functionally, catalyzes the reversible transfer of the terminal phosphate group between ATP and AMP. Plays an important role in cellular energy homeostasis and in adenine nucleotide metabolism. This is Adenylate kinase from Thermococcus sibiricus (strain DSM 12597 / MM 739).